The sequence spans 304 residues: Acetylglutamate kinase (304 aa).

Residues 70 to 71 (GG), Arg-92, and Asn-196 contribute to the substrate site.

It belongs to the acetylglutamate kinase family. ArgB subfamily.

Its subcellular location is the cytoplasm. It catalyses the reaction N-acetyl-L-glutamate + ATP = N-acetyl-L-glutamyl 5-phosphate + ADP. It participates in amino-acid biosynthesis; L-arginine biosynthesis; N(2)-acetyl-L-ornithine from L-glutamate: step 2/4. In terms of biological role, catalyzes the ATP-dependent phosphorylation of N-acetyl-L-glutamate. The polypeptide is Acetylglutamate kinase (Methanococcoides burtonii (strain DSM 6242 / NBRC 107633 / OCM 468 / ACE-M)).